Here is a 515-residue protein sequence, read N- to C-terminus: ATP synthase subunit alpha (515 aa).

169-176 (GDRQTGKT) serves as a coordination point for ATP.

Belongs to the ATPase alpha/beta chains family. In terms of assembly, F-type ATPases have 2 components, CF(1) - the catalytic core - and CF(0) - the membrane proton channel. CF(1) has five subunits: alpha(3), beta(3), gamma(1), delta(1), epsilon(1). CF(0) has three main subunits: a(1), b(2) and c(9-12). The alpha and beta chains form an alternating ring which encloses part of the gamma chain. CF(1) is attached to CF(0) by a central stalk formed by the gamma and epsilon chains, while a peripheral stalk is formed by the delta and b chains.

It is found in the cell inner membrane. It carries out the reaction ATP + H2O + 4 H(+)(in) = ADP + phosphate + 5 H(+)(out). In terms of biological role, produces ATP from ADP in the presence of a proton gradient across the membrane. The alpha chain is a regulatory subunit. This is ATP synthase subunit alpha from Neisseria meningitidis serogroup C (strain 053442).